Consider the following 206-residue polypeptide: uncharacterized protein (206 aa).

Positions 29–169 (YWHSTFHCWV…DGVFAEGFIV (141 aa)) constitute a Nudix hydrolase domain. The short motif at 69–90 (AGHIKSGESIEDGVRELKEELG) is the Nudix box element. Residues Glu-84 and Glu-88 each coordinate Mg(2+).

It belongs to the Nudix hydrolase family. Mg(2+) serves as cofactor.

This is an uncharacterized protein from Clostridium acetobutylicum (strain ATCC 824 / DSM 792 / JCM 1419 / IAM 19013 / LMG 5710 / NBRC 13948 / NRRL B-527 / VKM B-1787 / 2291 / W).